A 389-amino-acid chain; its full sequence is Nucleic acid dioxygenase ALKBH1 (389 aa).

Residues 1–127 (MGKMAAAVAS…CLKLYSQKPN (127 aa)) are interaction with DNAJB6. Residues 86-389 (SKWRAYGLEG…VKRKRLNPNS (304 aa)) form a tRNA-binding region. Substrate-binding positions include Trp-144 and 175-177 (YHY). Residues 213-347 (QAEAGILNYY…RVNMTVRQVL (135 aa)) enclose the Fe2OG dioxygenase domain. 220-222 (NYY) provides a ligand contact to 2-oxoglutarate. 3 residues coordinate Fe cation: His-231, Asp-233, and His-287. Asp-233 is a binding site for substrate. 338–344 (RVNMTVR) contributes to the 2-oxoglutarate binding site.

As to quaternary structure, monomer. Interacts with DNAJB6. The cofactor is Fe(2+). In adult organs, highly expressed in testis, eye, brain and kidney.

Its subcellular location is the nucleus. It carries out the reaction an N(6)-methyl-2'-deoxyadenosine in DNA + 2-oxoglutarate + O2 = a 2'-deoxyadenosine in DNA + formaldehyde + succinate + CO2. The catalysed reaction is 2'-deoxyribonucleotide-(2'-deoxyribose 5'-phosphate)-2'-deoxyribonucleotide-DNA = a 3'-end 2'-deoxyribonucleotide-(2,3-dehydro-2,3-deoxyribose 5'-phosphate)-DNA + a 5'-end 5'-phospho-2'-deoxyribonucleoside-DNA + H(+). The enzyme catalyses a methylated nucleobase within DNA + 2-oxoglutarate + O2 = a nucleobase within DNA + formaldehyde + succinate + CO2. It catalyses the reaction an N(1)-methyladenosine in tRNA + 2-oxoglutarate + O2 = an adenosine in tRNA + formaldehyde + succinate + CO2. It carries out the reaction 5-methylcytidine(34) in mitochondrial tRNA(Met) + 2 2-oxoglutarate + 2 O2 = 5-formylcytidine(34) in mitochondrial tRNA(Met) + 2 succinate + 2 CO2 + H2O. The catalysed reaction is an N(3)-methylcytidine in mRNA + 2-oxoglutarate + O2 = a cytidine in mRNA + formaldehyde + succinate + CO2. The enzyme catalyses N(1)-methyladenosine(58) in tRNA + 2-oxoglutarate + O2 = adenosine(58) in tRNA + formaldehyde + succinate + CO2. In terms of biological role, dioxygenase that acts on nucleic acids, such as DNA and tRNA. Requires molecular oxygen, alpha-ketoglutarate and iron. A number of activities have been described for this dioxygenase, but recent results suggest that it mainly acts on tRNAs and mediates their demethylation or oxidation depending on the context and subcellular compartment. Mainly acts as a tRNA demethylase by removing N(1)-methyladenine from various tRNAs, with a preference for N(1)-methyladenine at position 58 (m1A58) present on a stem loop structure of tRNAs. Acts as a regulator of translation initiation and elongation in response to glucose deprivation: regulates both translation initiation, by mediating demethylation of tRNA(Met), and translation elongation, N(1)-methyladenine-containing tRNAs being preferentially recruited to polysomes to promote translation elongation. In mitochondrion, specifically interacts with mt-tRNA(Met) and mediates oxidation of mt-tRNA(Met) methylated at cytosine(34) to form 5-formylcytosine (f(5)c) at this position. mt-tRNA(Met) containing the f(5)c modification at the wobble position enables recognition of the AUA codon in addition to the AUG codon, expanding codon recognition in mitochondrial translation. Specifically demethylates DNA methylated on the 6th position of adenine (N(6)-methyladenosine) DNA. N(6)-methyladenosine (m6A) DNA is present at some L1 elements in embryonic stem cells and probably promotes their silencing. Demethylates mRNAs containing N(3)-methylcytidine modification. Also able to repair alkylated single-stranded DNA by oxidative demethylation, but with low activity. Also has DNA lyase activity and introduces double-stranded breaks at abasic sites: cleaves both single-stranded DNA and double-stranded DNA at abasic sites, with the greatest activity towards double-stranded DNA with two abasic sites. DNA lyase activity does not require alpha-ketoglutarate and iron and leads to the formation of an irreversible covalent protein-DNA adduct with the 5' DNA product. DNA lyase activity is not required during base excision repair and class switch recombination of the immunoglobulin heavy chain during B lymphocyte activation. May play a role in placental trophoblast lineage differentiation. The protein is Nucleic acid dioxygenase ALKBH1 of Mus musculus (Mouse).